Reading from the N-terminus, the 213-residue chain is 3-isopropylmalate dehydratase small subunit (213 aa).

Belongs to the LeuD family. LeuD type 1 subfamily. In terms of assembly, heterodimer of LeuC and LeuD.

The catalysed reaction is (2R,3S)-3-isopropylmalate = (2S)-2-isopropylmalate. Its pathway is amino-acid biosynthesis; L-leucine biosynthesis; L-leucine from 3-methyl-2-oxobutanoate: step 2/4. Functionally, catalyzes the isomerization between 2-isopropylmalate and 3-isopropylmalate, via the formation of 2-isopropylmaleate. This chain is 3-isopropylmalate dehydratase small subunit, found in Pseudomonas syringae pv. syringae (strain B728a).